Reading from the N-terminus, the 312-residue chain is Dihydroorotate dehydrogenase B (NAD(+)), catalytic subunit (312 aa).

Residues Ser-23 and 47 to 48 each bind FMN; that span reads KA. Substrate contacts are provided by residues Lys-47 and 71 to 75; that span reads NAIGL. FMN is bound by residues Asn-103 and Asn-131. Asn-131 contacts substrate. Cys-134 functions as the Nucleophile in the catalytic mechanism. Residues Lys-171 and Ile-197 each coordinate FMN. 198–199 is a binding site for substrate; that stretch reads NT. Residues Gly-223, 249 to 250, and 271 to 272 each bind FMN; these read GG and GT.

This sequence belongs to the dihydroorotate dehydrogenase family. Type 1 subfamily. In terms of assembly, heterotetramer of 2 PyrK and 2 PyrD type B subunits. It depends on FMN as a cofactor.

The protein resides in the cytoplasm. It carries out the reaction (S)-dihydroorotate + NAD(+) = orotate + NADH + H(+). Its pathway is pyrimidine metabolism; UMP biosynthesis via de novo pathway; orotate from (S)-dihydroorotate (NAD(+) route): step 1/1. In terms of biological role, catalyzes the conversion of dihydroorotate to orotate with NAD(+) as electron acceptor. This chain is Dihydroorotate dehydrogenase B (NAD(+)), catalytic subunit (pyrDB), found in Streptococcus pneumoniae serotype 4 (strain ATCC BAA-334 / TIGR4).